The following is a 321-amino-acid chain: 26S proteasome non-ATPase regulatory subunit 7 (321 aa).

The MPN domain occupies 9-144; sequence VVVHPLVLLS…TEAYISVEEV (136 aa). K180 is covalently cross-linked (Glycyl lysine isopeptide (Lys-Gly) (interchain with G-Cter in ubiquitin)). 4 positions are modified to N6-acetyllysine: K204, K214, K313, and K314. A disordered region spans residues 281-321; that stretch reads ANRDAEKKEGQEKEESKKERKDDKEKEKSDAAKKEEKKEKK.

This sequence belongs to the peptidase M67A family. Component of the 19S proteasome regulatory particle complex. The 26S proteasome consists of a 20S core particle (CP) and two 19S regulatory subunits (RP). The regulatory particle is made of a lid composed of 9 subunits including PSMD7, a base containing 6 ATPases and few additional components. Within the complex, PSMD7 interacts with subunit PSMD4 through their respective MPN domain. Interacts with TRIM5.

Functionally, component of the 26S proteasome, a multiprotein complex involved in the ATP-dependent degradation of ubiquitinated proteins. This complex plays a key role in the maintenance of protein homeostasis by removing misfolded or damaged proteins, which could impair cellular functions, and by removing proteins whose functions are no longer required. Therefore, the proteasome participates in numerous cellular processes, including cell cycle progression, apoptosis, or DNA damage repair. This Mus musculus (Mouse) protein is 26S proteasome non-ATPase regulatory subunit 7 (Psmd7).